Consider the following 668-residue polypeptide: MVADASQQGQSNGAAFNQQQQYQQQQQRQLFGGEEEFGDEEELGDDVDLVVGDYSAAFAGEAGAEVDEAQAAALAAAHAQAQQQAQAAALAAVPDQIRKYVVLFNQAVQINNVQDISNAYEGTWNRLTDKFYARSEWPEAETIAPLVNDDQKFLTLYRELWYRHVYSRLSPDGEDRFHSYDNYCDFFNFVLNSDGPVQLELPAQWLWDIIDEFIYQFQSFSQWRNKVSNKSEDEIALLQDGGVWSSYSVLNVLYSLIQKSRITEQLVAASKGEDPDEVAGEFGSKPLYRMLGYFSIIGLLRVHVLLGDYTLALKMLDHIELNKKSGLINRVTACHVTAYYYVGFAYLMLRRYPDCIKSFTHILVFIMRLRQYHTRSYQYDQINKTADRMYALLSMACALCPTRLDENIQTQMRDKYGDQFSKMTRPGAEGLAAFEELFIYACPKFITANSPAYHDEEALVEYKQKAVFPDPTQHQLRVFLSDVKTQLSNANVRSFLRLYTTLGTDKLASFLEIDEEELVEMMMVMKNSTRSLKWSSGSLLHGQVVNTSDLDFVIDTDMVHIAESRVGRRYGDWFLRNGTRMHDVLNNIQAKPLPIVSKQVQDEAAAAAAEAKDAKDKKVKNAWAAGVKAGPPAFSQRSGGAGRSSVNKSAPAPAGAWGSSKPQPSVTA.

Polar residues predominate over residues 1–17 (MVADASQQGQSNGAAFN). Positions 1–42 (MVADASQQGQSNGAAFNQQQQYQQQQQRQLFGGEEEFGDEEE) are disordered. Over residues 18 to 32 (QQQQYQQQQQRQLFG) the composition is skewed to low complexity. Residues 33 to 42 (GEEEFGDEEE) show a composition bias toward acidic residues. The PCI domain maps to 358 to 552 (SFTHILVFIM…QVVNTSDLDF (195 aa)). Residues 625-668 (AGVKAGPPAFSQRSGGAGRSSVNKSAPAPAGAWGSSKPQPSVTA) are disordered. The span at 648–662 (KSAPAPAGAWGSSKP) shows a compositional bias: low complexity.

Belongs to the eIF-3 subunit L family. Component of the eukaryotic translation initiation factor 3 (eIF-3) complex.

Its subcellular location is the cytoplasm. Its function is as follows. Component of the eukaryotic translation initiation factor 3 (eIF-3) complex, which is involved in protein synthesis of a specialized repertoire of mRNAs and, together with other initiation factors, stimulates binding of mRNA and methionyl-tRNAi to the 40S ribosome. The eIF-3 complex specifically targets and initiates translation of a subset of mRNAs involved in cell proliferation. The chain is Eukaryotic translation initiation factor 3 subunit L from Mycosarcoma maydis (Corn smut fungus).